The chain runs to 218 residues: Probable transaldolase (218 aa).

The active-site Schiff-base intermediate with substrate is K84.

It belongs to the transaldolase family. Type 3B subfamily.

It is found in the cytoplasm. The enzyme catalyses D-sedoheptulose 7-phosphate + D-glyceraldehyde 3-phosphate = D-erythrose 4-phosphate + beta-D-fructose 6-phosphate. It participates in carbohydrate degradation; pentose phosphate pathway; D-glyceraldehyde 3-phosphate and beta-D-fructose 6-phosphate from D-ribose 5-phosphate and D-xylulose 5-phosphate (non-oxidative stage): step 2/3. In terms of biological role, transaldolase is important for the balance of metabolites in the pentose-phosphate pathway. This chain is Probable transaldolase, found in Sulfurihydrogenibium sp. (strain YO3AOP1).